Consider the following 899-residue polypeptide: Periodic tryptophan protein 2 homolog (899 aa).

WD repeat units follow at residues 9-52 (NLLG…TLPF), 53-92 (SHRK…VLYH), 94-132 (SFKA…DANA), 149-188 (QHFD…GFTP), 193-232 (GHRQ…GQDE), 252-291 (QNSA…MIHT), 294-334 (ISQN…YILK), 337-376 (GHFD…CIVT), 379-418 (EHTS…NFRT), 422-464 (PERL…DRLS), 465-504 (GHEG…QTSE), 507-546 (QLNS…QQAG), and 569-608 (AGTK…LLKK). Residues 639-668 (DEQGEASDFEDRIDRSLPGSKRGDPSARRK) are disordered. Positions 647-668 (FEDRIDRSLPGSKRGDPSARRK) are enriched in basic and acidic residues. Residues 669 to 709 (NPEVRVNGVAFSPNGSAFCAASTEGLLIYSLDTTIQFDPFD) form a WD 14 repeat. The segment at 866–899 (TGSDEQPGAGGMSLNDVMQQDEGNASEDEWIGLV) is disordered. The segment covering 889 to 899 (NASEDEWIGLV) has biased composition (acidic residues).

It belongs to the WD repeat PWP2 family.

This chain is Periodic tryptophan protein 2 homolog, found in Neurospora crassa (strain ATCC 24698 / 74-OR23-1A / CBS 708.71 / DSM 1257 / FGSC 987).